A 273-amino-acid chain; its full sequence is NADPH-dependent 7-cyano-7-deazaguanine reductase (273 aa).

80-82 lines the substrate pocket; it reads IES. NADPH is bound at residue 82 to 83; it reads SK. C180 functions as the Thioimide intermediate in the catalytic mechanism. D187 serves as the catalytic Proton donor. 219-220 is a substrate binding site; sequence HE. 248–249 contacts NADPH; it reads RG.

It belongs to the GTP cyclohydrolase I family. QueF type 2 subfamily. Homodimer.

Its subcellular location is the cytoplasm. It carries out the reaction 7-aminomethyl-7-carbaguanine + 2 NADP(+) = 7-cyano-7-deazaguanine + 2 NADPH + 3 H(+). It participates in tRNA modification; tRNA-queuosine biosynthesis. Its function is as follows. Catalyzes the NADPH-dependent reduction of 7-cyano-7-deazaguanine (preQ0) to 7-aminomethyl-7-deazaguanine (preQ1). This chain is NADPH-dependent 7-cyano-7-deazaguanine reductase, found in Bordetella avium (strain 197N).